The following is a 230-amino-acid chain: 2,3-bisphosphoglycerate-dependent phosphoglycerate mutase (230 aa).

Substrate-binding positions include 8–15, 21–22, arginine 60, 87–90, lysine 98, 114–115, and 183–184; these read RHGESEWN, TG, ERHY, RR, and GN. Catalysis depends on histidine 9, which acts as the Tele-phosphohistidine intermediate. The active-site Proton donor/acceptor is glutamate 87.

Belongs to the phosphoglycerate mutase family. BPG-dependent PGAM subfamily.

It catalyses the reaction (2R)-2-phosphoglycerate = (2R)-3-phosphoglycerate. It participates in carbohydrate degradation; glycolysis; pyruvate from D-glyceraldehyde 3-phosphate: step 3/5. Its function is as follows. Catalyzes the interconversion of 2-phosphoglycerate and 3-phosphoglycerate. The sequence is that of 2,3-bisphosphoglycerate-dependent phosphoglycerate mutase from Streptococcus thermophilus (strain CNRZ 1066).